A 182-amino-acid polypeptide reads, in one-letter code: MPVRPARCYRRIKGPPYTREEYIHGAPMIQIPKFDMGVTSAAARAAFSMVAKLVVEERGQIRMQALEAARQMAYKYLSKYVGDANYYLRLNVVPHHVLRENRMLAMAGADRLQEGMRLAFGSPAGRAARVEPGQVIFYAEFRPEHIAHIKEALRRAASKLPLPTRIVIETKDDGGGKTFTQK.

This sequence belongs to the universal ribosomal protein uL16 family.

The protein is Large ribosomal subunit protein uL16 of Pyrobaculum islandicum (strain DSM 4184 / JCM 9189 / GEO3).